The chain runs to 393 residues: Aspartate aminotransferase (393 aa).

The L-aspartate site is built by Gly-38, Trp-124, and Asn-174. Residue Lys-237 is modified to N6-(pyridoxal phosphate)lysine.

This sequence belongs to the class-I pyridoxal-phosphate-dependent aminotransferase family. In terms of assembly, homodimer. It depends on pyridoxal 5'-phosphate as a cofactor.

It is found in the cytoplasm. It carries out the reaction L-aspartate + 2-oxoglutarate = oxaloacetate + L-glutamate. This Bacillus subtilis (strain 168) protein is Aspartate aminotransferase (aspB).